A 115-amino-acid polypeptide reads, in one-letter code: ER exit protein (115 aa).

Belongs to the STEEP1 family.

Its function is as follows. May stimulate membrane curvature formation and subsequent endoplasmic reticulum exit site (ERES) establishment. This is ER exit protein from Schizosaccharomyces pombe (strain 972 / ATCC 24843) (Fission yeast).